The following is a 457-amino-acid chain: Multidrug resistance protein MdtK (457 aa).

12 helical membrane-spanning segments follow: residues 11-31 (LLAL…MGFV), 53-73 (IWLP…PVIA), 93-113 (WLAG…GYII), 127-147 (AVGY…FQVA), 160-180 (GMVM…IFIY), 188-208 (LGGI…FIAM), 243-263 (LPIA…ALLV), 276-296 (IALN…AAVT), 314-334 (AART…IFTV), 350-370 (VVAL…SDSI), 387-407 (IFFI…YILA), and 418-438 (PAGF…LMML).

Belongs to the multi antimicrobial extrusion (MATE) (TC 2.A.66.1) family. MdtK subfamily.

It is found in the cell inner membrane. Its function is as follows. Multidrug efflux pump that functions probably as a Na(+)/drug antiporter. The protein is Multidrug resistance protein MdtK of Salmonella enteritidis PT4 (strain P125109).